A 979-amino-acid polypeptide reads, in one-letter code: Protocadherin alpha-9 (979 aa).

Residues 1 to 59 form the signal peptide; the sequence is MRLGNRPEDIRTCVHLRWHIHGLLRQENASVVISKCLRHGAWRLLLWLLLLATWDVGSG. Topologically, residues 60 to 726 are extracellular; it reads QLHYSVPEEA…RREASLMDVN (667 aa). Cadherin domains lie at 64–163, 164–272, 273–380, 381–485, 486–595, and 611–707; these read SVPE…PPIF, SVAE…APVF, DRSV…APEI, VLTS…APAF, AHPE…PPTL, and VSRS…VPKA. N287 and N295 each carry an N-linked (GlcNAc...) asparagine glycan. N-linked (GlcNAc...) asparagine glycosylation occurs at N578. A helical membrane pass occupies residues 727–747; the sequence is VYLIIAICAVSSLLVLTLLLY. Over 748–979 the chain is Cytoplasmic; that stretch reads TALRCSAVPM…GNSTTDNSDQ (232 aa). PXXP repeat units follow at residues 763 to 766, 828 to 831, 861 to 864, 902 to 905, and 920 to 923; these read LGKP, PRQP, PGGP, PGNP, and PGSP. Residues 763 to 923 are 5 X 4 AA repeats of P-X-X-P; the sequence is LGKPTLVCSS…PDKFIIPGSP (161 aa). The tract at residues 859 to 979 is disordered; it reads AGPGGPDQQW…GNSTTDNSDQ (121 aa). Basic and acidic residues predominate over residues 938 to 952; sequence DKSDFITFGKKEETK.

Its subcellular location is the cell membrane. Functionally, potential calcium-dependent cell-adhesion protein. May be involved in the establishment and maintenance of specific neuronal connections in the brain. The polypeptide is Protocadherin alpha-9 (Mus musculus (Mouse)).